A 497-amino-acid polypeptide reads, in one-letter code: MSVTVFNPRIDDAAASDITAVTPVITALNELSSAQAPVEKAATKKVFVTTQGCQMNVYDSGKMLDVLGDSHGMEVTHNIDEADVLLMNTCSIREKAQEKVFSELGRWRKLKEKRPDLVIGVGGCVASQEGDNIQKRAPYVDMVFGPQTLHRLPELYDQSHQQREIAPKNRIGTVDVSFPSIEKFDFLPEPRVEGFKAFVSIMEGCSKYCSFCVVPYTRGEELSRPLDDVLAEIDSLAAQGVREINLLGQNVNGYRGEKDDGSICRFAELLHYVSHVDGVERIRYTTSHPLEFTDDIIDAYAQLPELVSHLHLPVQSGSNAILAAMKRNHTIDVYINQINKLKAIRPDIHLSSDFIIGFPGETDQDFQDTLNLAKELNFDHSYSFIYSKRPGTPAAELPDDVSFKTKKERLAEFQKVIIDSTLAKTHEMVGTTTRVLVEQVANRHPDCLIGTADNTRTVMFPYDVDKMDEMLGKIVSVRITDFVSPHMVKGEIEAVLA.

Residues 44–161 (KKVFVTTQGC…LPELYDQSHQ (118 aa)) form the MTTase N-terminal domain. Residues C53, C90, C124, C205, C209, and C212 each coordinate [4Fe-4S] cluster. In terms of domain architecture, Radical SAM core spans 191 to 423 (RVEGFKAFVS…QKVIIDSTLA (233 aa)). Residues 426–494 (HEMVGTTTRV…PHMVKGEIEA (69 aa)) enclose the TRAM domain.

The protein belongs to the methylthiotransferase family. MiaB subfamily. In terms of assembly, monomer. The cofactor is [4Fe-4S] cluster.

Its subcellular location is the cytoplasm. The catalysed reaction is N(6)-dimethylallyladenosine(37) in tRNA + (sulfur carrier)-SH + AH2 + 2 S-adenosyl-L-methionine = 2-methylsulfanyl-N(6)-dimethylallyladenosine(37) in tRNA + (sulfur carrier)-H + 5'-deoxyadenosine + L-methionine + A + S-adenosyl-L-homocysteine + 2 H(+). Functionally, catalyzes the methylthiolation of N6-(dimethylallyl)adenosine (i(6)A), leading to the formation of 2-methylthio-N6-(dimethylallyl)adenosine (ms(2)i(6)A) at position 37 in tRNAs that read codons beginning with uridine. This chain is tRNA-2-methylthio-N(6)-dimethylallyladenosine synthase, found in Psychrobacter cryohalolentis (strain ATCC BAA-1226 / DSM 17306 / VKM B-2378 / K5).